Consider the following 189-residue polypeptide: Putative manganese efflux pump MntP (189 aa).

Helical transmembrane passes span 3-23 (IVSTLLLALAMSADAFAAAVS), 41-61 (MIFGVIEATTPLVGWSLGRVA), 62-82 (ADYVTAWDHWIAFSILAFLGI), 103-123 (SFILLAMTALGTSIDAMSVGV), 132-152 (IVPVAFAIGIVTCIMVSAGVM), and 167-187 (IIGGLILIGIGSLILYKHLYG).

This sequence belongs to the MntP (TC 9.B.29) family.

It localises to the cell inner membrane. Functionally, probably functions as a manganese efflux pump. This is Putative manganese efflux pump MntP from Methylobacillus flagellatus (strain ATCC 51484 / DSM 6875 / VKM B-1610 / KT).